The primary structure comprises 267 residues: 4-hydroxy-tetrahydrodipicolinate reductase (267 aa).

NAD(+)-binding positions include 12 to 17 (GARGRM), Asp38, 100 to 102 (GTT), and 126 to 129 (APNF). The active-site Proton donor/acceptor is His156. Residue His157 coordinates (S)-2,3,4,5-tetrahydrodipicolinate. Lys160 functions as the Proton donor in the catalytic mechanism. 166–167 (GT) contributes to the (S)-2,3,4,5-tetrahydrodipicolinate binding site.

It belongs to the DapB family.

The protein resides in the cytoplasm. The enzyme catalyses (S)-2,3,4,5-tetrahydrodipicolinate + NAD(+) + H2O = (2S,4S)-4-hydroxy-2,3,4,5-tetrahydrodipicolinate + NADH + H(+). It carries out the reaction (S)-2,3,4,5-tetrahydrodipicolinate + NADP(+) + H2O = (2S,4S)-4-hydroxy-2,3,4,5-tetrahydrodipicolinate + NADPH + H(+). Its pathway is amino-acid biosynthesis; L-lysine biosynthesis via DAP pathway; (S)-tetrahydrodipicolinate from L-aspartate: step 4/4. Functionally, catalyzes the conversion of 4-hydroxy-tetrahydrodipicolinate (HTPA) to tetrahydrodipicolinate. This is 4-hydroxy-tetrahydrodipicolinate reductase from Bacillus pumilus (strain SAFR-032).